The chain runs to 269 residues: Tryptophan synthase alpha chain (269 aa).

Active-site proton acceptor residues include E49 and D60.

The protein belongs to the TrpA family. As to quaternary structure, tetramer of two alpha and two beta chains.

The enzyme catalyses (1S,2R)-1-C-(indol-3-yl)glycerol 3-phosphate + L-serine = D-glyceraldehyde 3-phosphate + L-tryptophan + H2O. It participates in amino-acid biosynthesis; L-tryptophan biosynthesis; L-tryptophan from chorismate: step 5/5. The alpha subunit is responsible for the aldol cleavage of indoleglycerol phosphate to indole and glyceraldehyde 3-phosphate. The sequence is that of Tryptophan synthase alpha chain from Pseudomonas putida (strain W619).